The chain runs to 323 residues: Aquaporin-4 (323 aa).

Over 1-36 the chain is Cytoplasmic; it reads MSDGAAARRWGKCGPPCSRESIMVAFKGVWTQAFWK. S-palmitoyl cysteine attachment occurs at residues Cys13 and Cys17. Residues 37-57 traverse the membrane as a helical segment; the sequence is AVTAEFLAMLIFVLLSVGSTI. The Extracellular portion of the chain corresponds to 58–69; it reads NWGGSENPLPVD. The chain crosses the membrane as a helical span at residues 70–89; it reads MVLISLCFGLSIATMVQCFG. Topologically, residues 90 to 93 are cytoplasmic; that stretch reads HISG. Residues 94–101 constitute an intramembrane region (discontinuously helical); sequence GHINPAVT. Residues 97 to 99 carry the NPA 1 motif; sequence NPA. Over 102–115 the chain is Cytoplasmic; it reads VAMVCTRKISIAKS. Residue Ser111 is modified to Phosphoserine; by PKG. A helical transmembrane segment spans residues 116-136; that stretch reads VFYITAQCLGAIIGAGILYLV. Residues 137–155 lie on the Extracellular side of the membrane; that stretch reads TPPSVVGGLGVTTVHGNLT. An N-linked (GlcNAc...) asparagine glycan is attached at Asn153. The helical transmembrane segment at 156 to 176 threads the bilayer; the sequence is AGHGLLVELIITFQLVFTIFA. Topologically, residues 177–184 are cytoplasmic; sequence SCDSKRTD. Ser180 is modified (phosphoserine; by PKC). The chain crosses the membrane as a helical span at residues 185–205; that stretch reads VTGSVALAIGFSVAIGHLFAI. The Extracellular portion of the chain corresponds to 206-208; the sequence is NYT. The segment at residues 209–222 is an intramembrane region (discontinuously helical); sequence GASMNPARSFGPAV. The NPA 2 signature appears at 213–215; sequence NPA. The Extracellular portion of the chain corresponds to 223–231; it reads IMGNWENHW. A helical membrane pass occupies residues 232-252; the sequence is IYWVGPIIGAVLAGALYEYVF. Over 253 to 323 the chain is Cytoplasmic; sequence CPDVELKRRL…DSSGEVLSSV (71 aa). Residues Ser276 and Ser285 each carry the phosphoserine modification. Thr289 is modified (phosphothreonine). Ser321 carries the phosphoserine modification.

This sequence belongs to the MIP/aquaporin (TC 1.A.8) family. As to quaternary structure, homotetramer. The tetramers can form oligomeric arrays in membranes. The size of the oligomers differs between tissues and is smaller in skeletal muscle than in brain. Interaction between AQP4 oligomeric arrays in close-by cells can contribute to cell-cell adhesion. Part of a complex containing MLC1, TRPV4, HEPACAM and ATP1B1. Post-translationally, phosphorylation by PKC at Ser-180 promotes internalization from the cell membrane, reducing the conductance by 50%. Phosphorylation by PKG at Ser-111 in response to glutamate increases conductance by 40%. Isoform Long: Palmitoylated on its N-terminal region. Isoform 3: Not palmitoylated. In terms of tissue distribution, detected in cerebellum. Detected on pericapillary astrocyte endfeet in cerebellum, and in skeletal muscle. Detected in glial lamellae in the hypothalamus (at protein level). Abundant in mature brain cortex, cerebellum and spinal cord. Highly expressed in the ependymal cell lining the aqueductal system and over the space of the brain in contact with the subarachnoid space. Detected in paraventricular and supraoptic nuclei, the granule cell layer of the dentate gyrus and the Purkinje cell layer in the cerebellum. Only weakly detectable in eye, kidney, intestine, and lung.

It localises to the cell membrane. The protein resides in the basolateral cell membrane. Its subcellular location is the endosome membrane. The protein localises to the sarcolemma. It is found in the cell projection. The catalysed reaction is H2O(in) = H2O(out). In terms of biological role, forms a water-specific channel. Plays an important role in brain water homeostasis and in glymphatic solute transport. Required for a normal rate of water exchange across the blood brain interface. Required for normal levels of cerebrospinal fluid influx into the brain cortex and parenchyma along paravascular spaces that surround penetrating arteries, and for normal drainage of interstitial fluid along paravenous drainage pathways. Thereby, it is required for normal clearance of solutes from the brain interstitial fluid, including soluble beta-amyloid peptides derived from APP. Plays a redundant role in urinary water homeostasis and urinary concentrating ability. This chain is Aquaporin-4 (Aqp4), found in Rattus norvegicus (Rat).